A 397-amino-acid chain; its full sequence is Mesoderm posterior protein 2 (397 aa).

4 disordered regions span residues 28 to 92 (WDST…REKL), 152 to 208 (QRGD…GRRP), 222 to 295 (SPSA…VPWT), and 351 to 376 (PNSE…SGLR). 2 stretches are compositionally biased toward low complexity: residues 32-48 (SPAS…CDGA) and 58-71 (SCSS…ATTP). Residues 81–135 (GQRQSASEREKLRMRTLARALHELRRFLPPSLAPAGQSLTKIETLRLAIRYIGHL) enclose the bHLH domain. 13 tandem repeats follow at residues 179 to 180 (GQ), 181 to 182 (GQ), 183 to 184 (GQ), 185 to 186 (GQ), 187 to 188 (GQ), 189 to 190 (GQ), 191 to 192 (GQ), 193 to 194 (GQ), 195 to 196 (GQ), 197 to 198 (GQ), 199 to 200 (GQ), 201 to 202 (GQ), and 203 to 204 (GQ). Residues 179-204 (GQGQGQGQGQGQGQGQGQGQGQGQGQ) form a 13 X 2 AA tandem repeats of G-Q region. The segment covering 180–206 (QGQGQGQGQGQGQGQGQGQGQGQGQGR) has biased composition (gly residues). Positions 235-244 (RLGRGVHDTD) are enriched in basic and acidic residues. Polar residues-rich tracts occupy residues 258–270 (PPYS…SDAS) and 365–375 (SEASPPQSSGL).

Degraded by the proteasome.

It localises to the nucleus. Transcription factor with important role in somitogenesis. Defines the rostrocaudal patterning of the somite by participating in distinct Notch pathways. Also regulates the FGF signaling pathway. Specifies the rostral half of the somites. Generates rostro-caudal polarity of somites by down-regulating in the presumptive rostral domain DLL1, a Notch ligand. Participates in the segment border formation by activating in the anterior presomitic mesoderm LFNG, a negative regulator of DLL1-Notch signaling. Acts as a strong suppressor of Notch activity. Together with MESP1 is involved in the epithelialization of somitic mesoderm and in the development of cardiac mesoderm. This is Mesoderm posterior protein 2 (MESP2) from Homo sapiens (Human).